A 618-amino-acid polypeptide reads, in one-letter code: Dihydroxy-acid dehydratase (618 aa).

Position 81 (Asp-81) interacts with Mg(2+). Cys-122 contacts [2Fe-2S] cluster. Residues Asp-123 and Lys-124 each coordinate Mg(2+). Residue Lys-124 is modified to N6-carboxylysine. A [2Fe-2S] cluster-binding site is contributed by Cys-195. Residue Glu-490 coordinates Mg(2+). Catalysis depends on Ser-516, which acts as the Proton acceptor.

Belongs to the IlvD/Edd family. In terms of assembly, homodimer. Requires [2Fe-2S] cluster as cofactor. Mg(2+) is required as a cofactor.

The enzyme catalyses (2R)-2,3-dihydroxy-3-methylbutanoate = 3-methyl-2-oxobutanoate + H2O. It catalyses the reaction (2R,3R)-2,3-dihydroxy-3-methylpentanoate = (S)-3-methyl-2-oxopentanoate + H2O. The protein operates within amino-acid biosynthesis; L-isoleucine biosynthesis; L-isoleucine from 2-oxobutanoate: step 3/4. It participates in amino-acid biosynthesis; L-valine biosynthesis; L-valine from pyruvate: step 3/4. Functions in the biosynthesis of branched-chain amino acids. Catalyzes the dehydration of (2R,3R)-2,3-dihydroxy-3-methylpentanoate (2,3-dihydroxy-3-methylvalerate) into 2-oxo-3-methylpentanoate (2-oxo-3-methylvalerate) and of (2R)-2,3-dihydroxy-3-methylbutanoate (2,3-dihydroxyisovalerate) into 2-oxo-3-methylbutanoate (2-oxoisovalerate), the penultimate precursor to L-isoleucine and L-valine, respectively. This chain is Dihydroxy-acid dehydratase, found in Gluconobacter oxydans (strain 621H) (Gluconobacter suboxydans).